Consider the following 289-residue polypeptide: Phosphatidylglycerol--prolipoprotein diacylglyceryl transferase (289 aa).

3 helical membrane-spanning segments follow: residues glycine 24–leucine 44, glycine 70–leucine 90, and glycine 111–phenylalanine 131. Arginine 158 serves as a coordination point for a 1,2-diacyl-sn-glycero-3-phospho-(1'-sn-glycerol). 2 helical membrane-spanning segments follow: residues glycine 219–phenylalanine 239 and phenylalanine 253–tryptophan 273.

It belongs to the Lgt family.

It localises to the cell inner membrane. The enzyme catalyses L-cysteinyl-[prolipoprotein] + a 1,2-diacyl-sn-glycero-3-phospho-(1'-sn-glycerol) = an S-1,2-diacyl-sn-glyceryl-L-cysteinyl-[prolipoprotein] + sn-glycerol 1-phosphate + H(+). The protein operates within protein modification; lipoprotein biosynthesis (diacylglyceryl transfer). Its function is as follows. Catalyzes the transfer of the diacylglyceryl group from phosphatidylglycerol to the sulfhydryl group of the N-terminal cysteine of a prolipoprotein, the first step in the formation of mature lipoproteins. This Chlorobaculum tepidum (strain ATCC 49652 / DSM 12025 / NBRC 103806 / TLS) (Chlorobium tepidum) protein is Phosphatidylglycerol--prolipoprotein diacylglyceryl transferase.